A 295-amino-acid chain; its full sequence is Acetylglutamate kinase (295 aa).

Residues 64–65, arginine 86, and asparagine 179 each bind substrate; that span reads GG.

Belongs to the acetylglutamate kinase family. ArgB subfamily.

The protein resides in the cytoplasm. It carries out the reaction N-acetyl-L-glutamate + ATP = N-acetyl-L-glutamyl 5-phosphate + ADP. It functions in the pathway amino-acid biosynthesis; L-arginine biosynthesis; N(2)-acetyl-L-ornithine from L-glutamate: step 2/4. Catalyzes the ATP-dependent phosphorylation of N-acetyl-L-glutamate. The polypeptide is Acetylglutamate kinase (Thermosynechococcus vestitus (strain NIES-2133 / IAM M-273 / BP-1)).